Consider the following 677-residue polypeptide: Polyunsaturated fatty acid lipoxygenase ALOX15B (677 aa).

Residues 2–125 (AKFRVRVSTG…ELVLREGAAK (124 aa)) form the PLAT domain. 8 residues coordinate Ca(2+): Gly15, Gly17, Asp39, His40, Gly42, Glu44, Asp86, and Ala87. In terms of domain architecture, Lipoxygenase spans 126–677 (VSWQDHHRTL…PPLIENSVSI (552 aa)). Residues His374, His379, His554, and Ile677 each coordinate Fe cation.

This sequence belongs to the lipoxygenase family. It depends on Fe cation as a cofactor.

The protein resides in the cytoplasm. The protein localises to the cytosol. It is found in the cell membrane. It localises to the cytoskeleton. Its subcellular location is the membrane. The protein resides in the cell junction. The protein localises to the adherens junction. It is found in the focal adhesion. It localises to the nucleus. It catalyses the reaction (5Z,8Z,11Z,14Z)-eicosatetraenoate + O2 = (15S)-hydroperoxy-(5Z,8Z,11Z,13E)-eicosatetraenoate. It carries out the reaction (9Z,12Z)-octadecadienoate + O2 = 13-hydroperoxy-(9Z,11E)-octadecadienoate. The enzyme catalyses (5S)-hydroxy-(6E,8Z,11Z,14Z)-eicosatetraenoate + O2 = (5S)-hydroxy-(15S)-hydroperoxy-(6E,8Z,11Z,13E)-eicosatetraenoate. The catalysed reaction is (5Z,8Z,11Z,14Z)-eicosatetraenoate + O2 = 5-hydroperoxy-(6E,8Z,11Z,14Z)-eicosatetraenoate. It catalyses the reaction (5S,6R)-dihydroxy-(7E,9E,11Z,14Z)-eicosatetraenoate + O2 = (5S,6R)-dihydroxy-(15S)-hydroperoxy-(7E,9E,11Z,13E)-eicosatetraenoate. It carries out the reaction (5S)-hydroperoxy-(6E,8Z,11Z,14Z)-eicosatetraenoate + O2 = (5S,15S)-dihydroperoxy-(6E,8Z,11Z,13E)-eicosatetraenoate. The enzyme catalyses 2-(5Z,8Z,11Z,14Z-eicosatetraenoyl)-glycerol + O2 = 2-[15(S)-hydroperoxy-(5Z,8Z,11Z,13E)-eicosatetraenoyl]-glycerol. The catalysed reaction is (8S)-hydroperoxy-(5Z,9E,11Z,14Z)-eicosatetraenoate + O2 = (8S,15S)-dihydroperoxy-(5Z,9E,11Z,13E)-eicosatetraenoate. It catalyses the reaction N-(5Z,8Z,11Z,14Z)-eicosatetraenoyl-L-alanine + O2 = N-(15S)-hydroperoxy-(5Z,8Z,11Z,13E)-eicosatetraenoyl-alanine. It carries out the reaction N-(5Z,8Z,11Z,14Z)-eicosatetraenoyl-gamma-aminobutanoate + O2 = N-(15S)-hydroperoxy-(5Z,8Z,11Z,13E)-eicosatetraenoyl-gamma-aminobutanoate. The enzyme catalyses N-(5Z,8Z,11Z,14Z)-eicosatetraenoyl-glycine + O2 = N-(15S)-hydroperoxy-(5Z,8Z,11Z,13E)-eicosatetraenoyl-glycine. The catalysed reaction is N-(5Z,8Z,11Z,14Z)-eicosatetraenoyl-taurine + O2 = N-(15S)-hydroperoxy-(5Z,8Z,11Z,13E)-eicosatetraenoyl-taurine. It catalyses the reaction 2-(5Z,8Z,11Z,14Z-eicosatetraenoyl)-glycerol + O2 = 2-[12-hydroperoxy-(5Z,8Z,10E,14Z)-eicosatetraenoyl]-glycerol. It carries out the reaction 1-octadecanoyl-2-(5Z,8Z,11Z,14Z-eicosatetraenoyl)-sn-glycero-3-phosphocholine + O2 = 1-octadecanoyl-2-(15-hydroperoxy-5Z,8Z,11Z,13E-eicosatetraenoyl)-sn-glycero-3-phosphocholine. The enzyme catalyses a 1-acyl-2-(5Z,8Z,11Z,14Z-eicosatetraenoyl)-sn-glycero-3-phospho-(1D-myo-inositol) + O2 = a 1-acyl-2-(15-hydroperoxy-5Z,8Z,11Z,13E-eicosatetraenoyl)-sn-glycero-3-phospho-(1D-myo-inositol). The catalysed reaction is a 1-acyl-2-(8Z,11Z,14Z-eicosatrienoyl)-sn-glycero-3-phospho-(1D-myo-inositol) + O2 = a 1-acyl-2-(15-hydroperoxy-8Z,11Z,13E-eicosatrienoyl)-sn-glycero-3-phospho-(1D-myo-inositol). It catalyses the reaction 1-octadecanoyl-2-(5Z,8Z,11Z,14Z)-eicosatetraenoyl-sn-glycero-3-phosphoethanolamine + O2 = 1-octadecanoyl-2-(15-hydroperoxy-5Z,8Z,11Z,13E-eicosatetraenoyl)-sn-glycero-3-phosphoethanolamine. It carries out the reaction 1-octadecanoyl-2-(5Z,8Z,11Z,14Z-eicosatetraenoyl)-sn-glycero-3-phospho-(1D-myo-inositol) + O2 = 1-octadecanoyl-2-(15-hydroperoxy-5Z,8Z,11Z,13E-eicosatetraenoyl)-sn-glycero-3-phospho-(1D-myo-inositol). The enzyme catalyses (8Z,11Z,14Z)-eicosatrienoate + O2 = 15-hydroperoxy-(8Z,11Z,13E)-eicosatrienoate. The catalysed reaction is (7S)-hydroperoxy-(4Z,8E,10Z,13Z,16Z,19Z)-docosahexaenoate + O2 = (7S,17S)-dihydroperoxy-(4Z,8E,10Z,13Z,15E,19Z)-docosahexaenoate. It participates in lipid metabolism; hydroperoxy eicosatetraenoic acid biosynthesis. Non-heme iron-containing dioxygenase that catalyzes the stereo-specific peroxidation of free and esterified polyunsaturated fatty acids (PUFAs) generating a spectrum of bioactive lipid mediators. Inserts a peroxyl group at C15 of arachidonate ((5Z,8Z,11Z,14Z)-eicosatetraenoate) producing (15S)-hydroperoxyeicosatetraenoate/(15S)-HPETE. Also peroxidizes linoleate ((9Z,12Z)-octadecadienoate) to 13-hydroperoxyoctadecadienoate/13-HPODE. Oxygenates arachidonyl derivatives such as 2-arachidonoylglycerol (2-AG) leading to the production and extracellular release of 15-hydroxyeicosatetraenoyl glycerol (15-HETE-G) that acts as a peroxisome proliferator-activated receptor alpha agonist. Has the ability to efficiently class-switch ALOX5 pro-inflammatory mediators into anti-inflammatory intermediates. Participates in the sequential oxidations of DHA ((4Z,7Z,10Z,13Z,16Z,19Z)-docosahexaenoate) to generate specialized pro-resolving mediators (SPMs) resolvin D5 ((7S,17S)-diHPDHA), which can actively down-regulate the immune response and have anti-aggregation properties with platelets. In addition to free PUFAs hydrolyzed from phospholipids, it directly oxidizes PUFAs esterified to membrane-bound phospholipids. Has no detectable 8S-lipoxygenase activity on arachidonate but reacts with (8S)-HPETE to produce (8S,15S)-diHPETE. May regulate progression through the cell cycle and cell proliferation. May also regulate cytokine secretion by macrophages and therefore play a role in the immune response. May also regulate macrophage differentiation into proatherogenic foam cells. This chain is Polyunsaturated fatty acid lipoxygenase ALOX15B, found in Rattus norvegicus (Rat).